Reading from the N-terminus, the 347-residue chain is GMP reductase (347 aa).

108–131 provides a ligand contact to NADP(+); that stretch reads ADFEKTKQILAQSPALNFVCIDVA. The K(+) site is built by glycine 181 and glycine 183. Cysteine 186 acts as the Thioimidate intermediate in catalysis. 216-239 provides a ligand contact to NADP(+); it reads IVSDGGCTMPGDVAKAFGGGADFV.

The protein belongs to the IMPDH/GMPR family. GuaC type 1 subfamily. As to quaternary structure, homotetramer.

The catalysed reaction is IMP + NH4(+) + NADP(+) = GMP + NADPH + 2 H(+). Functionally, catalyzes the irreversible NADPH-dependent deamination of GMP to IMP. It functions in the conversion of nucleobase, nucleoside and nucleotide derivatives of G to A nucleotides, and in maintaining the intracellular balance of A and G nucleotides. This chain is GMP reductase, found in Citrobacter koseri (strain ATCC BAA-895 / CDC 4225-83 / SGSC4696).